A 343-amino-acid polypeptide reads, in one-letter code: GTPase Obg (343 aa).

The 157-residue stretch at 1 to 157 (MKFIDEVSIS…IEVRLELKLI (157 aa)) folds into the Obg domain. The disordered stretch occupies residues 13-44 (SGRGGPGCVSFRRESMQARGGPDGGNGGKGGD). The span at 33–43 (GPDGGNGGKGG) shows a compositional bias: gly residues. Residues 158 to 338 (ADVGIVGFPN…FVQELARQIL (181 aa)) form the OBG-type G domain. GTP is bound by residues 164–171 (GFPNAGKS), 189–193 (FTTLT), 211–214 (DIPG), 290–293 (NKID), and 319–321 (SAV). Positions 171 and 191 each coordinate Mg(2+).

The protein belongs to the TRAFAC class OBG-HflX-like GTPase superfamily. OBG GTPase family. In terms of assembly, monomer. Mg(2+) is required as a cofactor.

The protein localises to the cytoplasm. Functionally, an essential GTPase which binds GTP, GDP and possibly (p)ppGpp with moderate affinity, with high nucleotide exchange rates and a fairly low GTP hydrolysis rate. Plays a role in control of the cell cycle, stress response, ribosome biogenesis and in those bacteria that undergo differentiation, in morphogenesis control. The protein is GTPase Obg of Bdellovibrio bacteriovorus (strain ATCC 15356 / DSM 50701 / NCIMB 9529 / HD100).